The primary structure comprises 457 residues: Cysteine--tRNA ligase (457 aa).

Zn(2+) is bound at residue cysteine 27. The 'HIGH' region motif lies at 29 to 39; the sequence is PTVYDFAHIGN. Residues cysteine 211, histidine 236, and glutamate 240 each coordinate Zn(2+). The 'KMSKS' region motif lies at 269 to 273; the sequence is KMSKS. Residue lysine 272 participates in ATP binding.

Belongs to the class-I aminoacyl-tRNA synthetase family. Monomer. The cofactor is Zn(2+).

It is found in the cytoplasm. The enzyme catalyses tRNA(Cys) + L-cysteine + ATP = L-cysteinyl-tRNA(Cys) + AMP + diphosphate. This chain is Cysteine--tRNA ligase, found in Ehrlichia ruminantium (strain Welgevonden).